A 372-amino-acid polypeptide reads, in one-letter code: Glutamate 5-kinase (372 aa).

Position 6 (Lys6) interacts with ATP. The substrate site is built by Ser46, Asp133, and Asn145. ATP is bound by residues Thr165 to Asp166 and Thr207 to Lys213. The 79-residue stretch at Ser272–Lys350 folds into the PUA domain.

Belongs to the glutamate 5-kinase family.

It localises to the cytoplasm. It carries out the reaction L-glutamate + ATP = L-glutamyl 5-phosphate + ADP. The protein operates within amino-acid biosynthesis; L-proline biosynthesis; L-glutamate 5-semialdehyde from L-glutamate: step 1/2. Catalyzes the transfer of a phosphate group to glutamate to form L-glutamate 5-phosphate. In Thermoanaerobacter pseudethanolicus (strain ATCC 33223 / 39E) (Clostridium thermohydrosulfuricum), this protein is Glutamate 5-kinase.